The sequence spans 292 residues: Probable septum site-determining protein MinC (292 aa).

The disordered stretch occupies residues 112–188; it reads DTAPPNDVAT…PQSSSALVIT (77 aa). Low complexity predominate over residues 128–137; that stretch reads EATAEAAAKA. A compositionally biased stretch (acidic residues) spans 140 to 150; that stretch reads QDDEAYGEQAD. A compositionally biased stretch (polar residues) spans 171–185; the sequence is ANRPTATPPQSSSAL.

It belongs to the MinC family. Interacts with MinD and FtsZ.

Its function is as follows. Cell division inhibitor that blocks the formation of polar Z ring septums. Rapidly oscillates between the poles of the cell to destabilize FtsZ filaments that have formed before they mature into polar Z rings. Prevents FtsZ polymerization. This Bordetella bronchiseptica (strain ATCC BAA-588 / NCTC 13252 / RB50) (Alcaligenes bronchisepticus) protein is Probable septum site-determining protein MinC.